A 1022-amino-acid chain; its full sequence is Translation initiation factor IF-2 (1022 aa).

The span at 82–94 (EQSRKTLEKEQHL) shows a compositional bias: basic and acidic residues. 2 disordered regions span residues 82–129 (EQSR…AVPA) and 342–436 (SENK…QREL). Residues 104 to 115 (ASKSSAKGSESA) are compositionally biased toward low complexity. The span at 375–384 (KAKKGKKKKK) shows a compositional bias: basic residues. The span at 421–436 (SEREREQEEGAAQREL) shows a compositional bias: basic and acidic residues. In terms of domain architecture, tr-type G spans 519–689 (TRPPVVTIMG…LTEAELRELK (171 aa)). The interval 528–535 (GHVDHGKT) is G1. 528-535 (GHVDHGKT) contacts GTP. Residues 553–557 (GITQH) are G2. The G3 stretch occupies residues 575–578 (DTPG). Residues 575-579 (DTPGH) and 629-632 (NKID) contribute to the GTP site. The tract at residues 629-632 (NKID) is G4. Positions 665-667 (SAK) are G5.

Belongs to the TRAFAC class translation factor GTPase superfamily. Classic translation factor GTPase family. IF-2 subfamily.

The protein localises to the cytoplasm. Its function is as follows. One of the essential components for the initiation of protein synthesis. Protects formylmethionyl-tRNA from spontaneous hydrolysis and promotes its binding to the 30S ribosomal subunits. Also involved in the hydrolysis of GTP during the formation of the 70S ribosomal complex. This Chlorobium chlorochromatii (strain CaD3) protein is Translation initiation factor IF-2.